Reading from the N-terminus, the 86-residue chain is Small ribosomal subunit protein bS18 (86 aa).

This sequence belongs to the bacterial ribosomal protein bS18 family. In terms of assembly, part of the 30S ribosomal subunit. Forms a tight heterodimer with protein bS6.

In terms of biological role, binds as a heterodimer with protein bS6 to the central domain of the 16S rRNA, where it helps stabilize the platform of the 30S subunit. This chain is Small ribosomal subunit protein bS18, found in Campylobacter lari (strain RM2100 / D67 / ATCC BAA-1060).